The sequence spans 283 residues: Thymidylate synthase (283 aa).

DUMP is bound at residue Arg22. Residue Cys160 is the Nucleophile of the active site. DUMP contacts are provided by residues 180–183 (RSCD), Asn191, and 221–223 (HIY). Position 183 (Asp183) interacts with (6R)-5,10-methylene-5,6,7,8-tetrahydrofolate. Ser282 serves as a coordination point for (6R)-5,10-methylene-5,6,7,8-tetrahydrofolate.

This sequence belongs to the thymidylate synthase family. Bacterial-type ThyA subfamily. In terms of assembly, homodimer.

The protein resides in the cytoplasm. It catalyses the reaction dUMP + (6R)-5,10-methylene-5,6,7,8-tetrahydrofolate = 7,8-dihydrofolate + dTMP. It participates in pyrimidine metabolism; dTTP biosynthesis. Functionally, catalyzes the reductive methylation of 2'-deoxyuridine-5'-monophosphate (dUMP) to 2'-deoxythymidine-5'-monophosphate (dTMP) while utilizing 5,10-methylenetetrahydrofolate (mTHF) as the methyl donor and reductant in the reaction, yielding dihydrofolate (DHF) as a by-product. This enzymatic reaction provides an intracellular de novo source of dTMP, an essential precursor for DNA biosynthesis. This is Thymidylate synthase from Tolumonas auensis (strain DSM 9187 / NBRC 110442 / TA 4).